The primary structure comprises 343 residues: Oxygen-dependent coproporphyrinogen-III oxidase (343 aa).

Serine 99 lines the substrate pocket. A divalent metal cation contacts are provided by histidine 103 and histidine 113. The active-site Proton donor is histidine 113. Position 115-117 (115-117 (NYR)) interacts with substrate. 2 residues coordinate a divalent metal cation: histidine 147 and histidine 177. Residues 267–302 (YVEFNLVWDRGTIFGLQTNGRTESILMSLPPLARWE) form an important for dimerization region.

It belongs to the aerobic coproporphyrinogen-III oxidase family. As to quaternary structure, homodimer. The cofactor is a divalent metal cation.

The protein localises to the cytoplasm. The catalysed reaction is coproporphyrinogen III + O2 + 2 H(+) = protoporphyrinogen IX + 2 CO2 + 2 H2O. Its pathway is porphyrin-containing compound metabolism; protoporphyrin-IX biosynthesis; protoporphyrinogen-IX from coproporphyrinogen-III (O2 route): step 1/1. Its function is as follows. Involved in the heme and chlorophyll biosynthesis. Catalyzes the aerobic oxidative decarboxylation of propionate groups of rings A and B of coproporphyrinogen-III to yield the vinyl groups in protoporphyrinogen-IX. This Prochlorococcus marinus (strain SARG / CCMP1375 / SS120) protein is Oxygen-dependent coproporphyrinogen-III oxidase.